Here is a 279-residue protein sequence, read N- to C-terminus: Lectin 9 (279 aa).

A signal peptide spans 1–23 (MALSSALIKIFITFLFLQNHVNS). N-linked (GlcNAc...) asparagine glycans are attached at residues Asn-116, Asn-139, Asn-235, and Asn-272.

The protein belongs to the leguminous lectin family.

May be involved in arbuscular mycorrhizal (AM) symbiosis with AM fungi. This chain is Lectin 9, found in Medicago truncatula (Barrel medic).